The primary structure comprises 432 residues: Glutamate-1-semialdehyde 2,1-aminomutase 2 (432 aa).

N6-(pyridoxal phosphate)lysine is present on K268.

This sequence belongs to the class-III pyridoxal-phosphate-dependent aminotransferase family. HemL subfamily. As to quaternary structure, homodimer. It depends on pyridoxal 5'-phosphate as a cofactor.

Its subcellular location is the cytoplasm. It catalyses the reaction (S)-4-amino-5-oxopentanoate = 5-aminolevulinate. Its pathway is porphyrin-containing compound metabolism; protoporphyrin-IX biosynthesis; 5-aminolevulinate from L-glutamyl-tRNA(Glu): step 2/2. This Listeria innocua serovar 6a (strain ATCC BAA-680 / CLIP 11262) protein is Glutamate-1-semialdehyde 2,1-aminomutase 2.